Consider the following 158-residue polypeptide: Small ribosomal subunit protein uS17 (158 aa).

Alanine 2 carries the post-translational modification N-acetylalanine. Arginine 22 carries the citrulline modification. Residues lysine 38, lysine 45, and lysine 58 each carry the N6-acetyllysine modification. The S-palmitoyl cysteine moiety is linked to residue cysteine 60. Position 67 is a phosphoserine (serine 67). Position 69 is an omega-N-methylarginine (arginine 69). Serine 110 carries the phosphoserine modification.

This sequence belongs to the universal ribosomal protein uS17 family. Component of the small ribosomal subunit. Part of the small subunit (SSU) processome, composed of more than 70 proteins and the RNA chaperone small nucleolar RNA (snoRNA) U3. Citrullinated by PADI4.

The protein localises to the cytoplasm. It localises to the nucleus. The protein resides in the nucleolus. In terms of biological role, component of the small ribosomal subunit. The ribosome is a large ribonucleoprotein complex responsible for the synthesis of proteins in the cell. Part of the small subunit (SSU) processome, first precursor of the small eukaryotic ribosomal subunit. During the assembly of the SSU processome in the nucleolus, many ribosome biogenesis factors, an RNA chaperone and ribosomal proteins associate with the nascent pre-rRNA and work in concert to generate RNA folding, modifications, rearrangements and cleavage as well as targeted degradation of pre-ribosomal RNA by the RNA exosome. This chain is Small ribosomal subunit protein uS17 (Rps11), found in Mus musculus (Mouse).